A 152-amino-acid chain; its full sequence is Transcriptional repressor NrdR (152 aa).

The segment at 3-34 (CPYCQHPDSDVIDTRKLHNGETIRRRRKCEAC) is a zinc-finger region. The region spanning 49–139 (ITVVKKNGER…VYRSFADIGK (91 aa)) is the ATP-cone domain.

It belongs to the NrdR family. The cofactor is Zn(2+).

Its function is as follows. Negatively regulates transcription of bacterial ribonucleotide reductase nrd genes and operons by binding to NrdR-boxes. This is Transcriptional repressor NrdR from Roseiflexus sp. (strain RS-1).